A 136-amino-acid polypeptide reads, in one-letter code: NADPH-dependent 7-cyano-7-deazaguanine reductase (136 aa).

Catalysis depends on cysteine 53, which acts as the Thioimide intermediate. Aspartate 60 functions as the Proton donor in the catalytic mechanism. Substrate-binding positions include 75–77 (VEL) and 94–95 (HE).

Belongs to the GTP cyclohydrolase I family. QueF type 1 subfamily.

It localises to the cytoplasm. The enzyme catalyses 7-aminomethyl-7-carbaguanine + 2 NADP(+) = 7-cyano-7-deazaguanine + 2 NADPH + 3 H(+). It functions in the pathway tRNA modification; tRNA-queuosine biosynthesis. Catalyzes the NADPH-dependent reduction of 7-cyano-7-deazaguanine (preQ0) to 7-aminomethyl-7-deazaguanine (preQ1). The sequence is that of NADPH-dependent 7-cyano-7-deazaguanine reductase from Trichormus variabilis (strain ATCC 29413 / PCC 7937) (Anabaena variabilis).